The chain runs to 460 residues: Histidinol dehydrogenase (460 aa).

Ser269, Gln291, and His294 together coordinate substrate. The Zn(2+) site is built by Gln291 and His294. Residues Glu358 and His359 each act as proton acceptor in the active site. The substrate site is built by His359, Asp392, Glu446, and His451. Asp392 is a binding site for Zn(2+). A Zn(2+)-binding site is contributed by His451.

This sequence belongs to the histidinol dehydrogenase family. The cofactor is Zn(2+).

The enzyme catalyses L-histidinol + 2 NAD(+) + H2O = L-histidine + 2 NADH + 3 H(+). It participates in amino-acid biosynthesis; L-histidine biosynthesis; L-histidine from 5-phospho-alpha-D-ribose 1-diphosphate: step 9/9. In terms of biological role, catalyzes the sequential NAD-dependent oxidations of L-histidinol to L-histidinaldehyde and then to L-histidine. In Rhodopirellula baltica (strain DSM 10527 / NCIMB 13988 / SH1), this protein is Histidinol dehydrogenase.